The primary structure comprises 48 residues: 2-deoxy-glucose resistant protein 1, mitochondrial (48 aa).

The N-terminal 28 residues, 1–28 (MQVGFVSQTNCRSFPACIVFLFQMSQRQ), are a transit peptide targeting the mitochondrion.

It is found in the mitochondrion. The chain is 2-deoxy-glucose resistant protein 1, mitochondrial (DGR1) from Saccharomyces cerevisiae (strain ATCC 204508 / S288c) (Baker's yeast).